Consider the following 284-residue polypeptide: Bifunctional protein FolD (284 aa).

NADP(+) is bound by residues 164–166 (GRS) and Ser189.

The protein belongs to the tetrahydrofolate dehydrogenase/cyclohydrolase family. Homodimer.

It catalyses the reaction (6R)-5,10-methylene-5,6,7,8-tetrahydrofolate + NADP(+) = (6R)-5,10-methenyltetrahydrofolate + NADPH. It carries out the reaction (6R)-5,10-methenyltetrahydrofolate + H2O = (6R)-10-formyltetrahydrofolate + H(+). It participates in one-carbon metabolism; tetrahydrofolate interconversion. Catalyzes the oxidation of 5,10-methylenetetrahydrofolate to 5,10-methenyltetrahydrofolate and then the hydrolysis of 5,10-methenyltetrahydrofolate to 10-formyltetrahydrofolate. The chain is Bifunctional protein FolD from Listeria welshimeri serovar 6b (strain ATCC 35897 / DSM 20650 / CCUG 15529 / CIP 8149 / NCTC 11857 / SLCC 5334 / V8).